The chain runs to 169 residues: Large ribosomal subunit protein uL10 (169 aa).

It belongs to the universal ribosomal protein uL10 family. Part of the 50S ribosomal subunit.

In Deinococcus radiodurans (strain ATCC 13939 / DSM 20539 / JCM 16871 / CCUG 27074 / LMG 4051 / NBRC 15346 / NCIMB 9279 / VKM B-1422 / R1), this protein is Large ribosomal subunit protein uL10 (rplJ).